We begin with the raw amino-acid sequence, 228 residues long: 2-hydroxy-3-keto-5-methylthiopentenyl-1-phosphate phosphatase (228 aa).

Belongs to the HAD-like hydrolase superfamily. MtnX family.

It catalyses the reaction 2-hydroxy-5-methylsulfanyl-3-oxopent-1-enyl phosphate + H2O = 1,2-dihydroxy-5-(methylsulfanyl)pent-1-en-3-one + phosphate. The protein operates within amino-acid biosynthesis; L-methionine biosynthesis via salvage pathway; L-methionine from S-methyl-5-thio-alpha-D-ribose 1-phosphate: step 4/6. Its function is as follows. Dephosphorylates 2-hydroxy-3-keto-5-methylthiopentenyl-1-phosphate (HK-MTPenyl-1-P) yielding 1,2-dihydroxy-3-keto-5-methylthiopentene (DHK-MTPene). The protein is 2-hydroxy-3-keto-5-methylthiopentenyl-1-phosphate phosphatase of Lysinibacillus sphaericus (strain C3-41).